Here is a 622-residue protein sequence, read N- to C-terminus: Type 2 DNA topoisomerase 6 subunit B (622 aa).

ATP-binding positions include asparagine 48, aspartate 80, 101 to 102, 111 to 118, and lysine 435; these read SR and GQQGIGIS.

Belongs to the TOP6B family. In terms of assembly, homodimer. Heterotetramer of two Top6A and two Top6B chains.

The enzyme catalyses ATP-dependent breakage, passage and rejoining of double-stranded DNA.. In terms of biological role, relaxes both positive and negative superturns and exhibits a strong decatenase activity. The polypeptide is Type 2 DNA topoisomerase 6 subunit B (Methanococcoides burtonii (strain DSM 6242 / NBRC 107633 / OCM 468 / ACE-M)).